The sequence spans 667 residues: DNA ligase (667 aa).

NAD(+) is bound by residues 32 to 36, 81 to 82, and Glu-110; these read DSEYD and SL. Lys-112 acts as the N6-AMP-lysine intermediate in catalysis. Residues Arg-133, Glu-167, Lys-283, and Lys-307 each coordinate NAD(+). Positions 401, 404, 419, and 424 each coordinate Zn(2+). The region spanning 586-667 is the BRCT domain; the sequence is EGHPDFKDKT…FVQKQNEIEG (82 aa).

The protein belongs to the NAD-dependent DNA ligase family. LigA subfamily. It depends on Mg(2+) as a cofactor. Requires Mn(2+) as cofactor.

It carries out the reaction NAD(+) + (deoxyribonucleotide)n-3'-hydroxyl + 5'-phospho-(deoxyribonucleotide)m = (deoxyribonucleotide)n+m + AMP + beta-nicotinamide D-nucleotide.. DNA ligase that catalyzes the formation of phosphodiester linkages between 5'-phosphoryl and 3'-hydroxyl groups in double-stranded DNA using NAD as a coenzyme and as the energy source for the reaction. It is essential for DNA replication and repair of damaged DNA. This chain is DNA ligase, found in Staphylococcus saprophyticus subsp. saprophyticus (strain ATCC 15305 / DSM 20229 / NCIMB 8711 / NCTC 7292 / S-41).